The primary structure comprises 343 residues: MAKWLRDYLNLGSRRPPPQPPTPDYTESDILRAYREQKDLDFEDPYEDSNGRAEPEVTGSGDPKYNSPRHRLIKVEAADMARAKALLGSPGEEPEAETEYSDPFDAQPQPPAPNSGYMEPYDARSVSSEQPSRAVQLYDTPYEEQATKPEDGGSSGQSRRPLEDERPADEYDQPWEWKKDHISRAFAVQFDGPDWERTPCSTKEPWRPQPAERVDTALALEKQPWFHGPLSRAEAENLLSLCKEGSYLVRLSETRAQDCILSLRSNQGSMHLKFARTRENQVVLGQHSGPFPSIPELVLHYSARPLPVQGAEHLALLYPVTSSQSSQGPCTLAAKPERGQGDP.

Residues 1 to 176 (MAKWLRDYLN…PADEYDQPWE (176 aa)) are disordered. Composition is skewed to basic and acidic residues over residues 29–40 (DILRAYREQKDL) and 73–82 (IKVEAADMAR). Residues 92 to 102 (EEPEAETEYSD) show a composition bias toward acidic residues. The segment covering 160 to 176 (RPLEDERPADEYDQPWE) has biased composition (basic and acidic residues). The SH2 domain maps to 225 to 320 (WFHGPLSRAE…AEHLALLYPV (96 aa)). Residues 322–343 (SSQSSQGPCTLAAKPERGQGDP) form a disordered region.

Tyrosine phosphorylated by ABL. In terms of tissue distribution, specifically expressed in brain.

In terms of biological role, may function as an adapter protein. In Mus musculus (Mouse), this protein is SH2 domain-containing adapter protein D (Shd).